We begin with the raw amino-acid sequence, 1829 residues long: Unconventional myosin-Va (1829 aa).

The Myosin N-terminal SH3-like domain maps to T8 to P60. Residues V69 to A764 form the Myosin motor domain. An ATP-binding site is contributed by G163–T170. A disordered region spans residues A599–T635. Residues L644–D666 form an actin-binding region. IQ domains follow at residues L767–R789, M790–R814, R815–C837, M838–L862, R863–L887, and K888–S915. Coiled-coil stretches lie at residues V916–T1239 and G1315–V1419. Disordered stretches follow at residues I1106–K1148 and K1170–G1199. Over residues T1117–I1131 the composition is skewed to polar residues. Composition is skewed to basic and acidic residues over residues L1137 to K1148 and K1170 to P1196. The Dilute domain occupies T1508–D1784. Phosphothreonine is present on T1734.

This sequence belongs to the TRAFAC class myosin-kinesin ATPase superfamily. Myosin family. In terms of assembly, may be a homodimer, which associates with multiple calmodulin or myosin light chains. In terms of tissue distribution, neuronal and non-neuronal cells of the brain.

It is found in the golgi apparatus membrane. The enzyme catalyses ATP + H2O = ADP + phosphate + H(+). In terms of biological role, processive actin-based motor that can move in large steps approximating the 36-nm pseudo-repeat of the actin filament. Can hydrolyze ATP in the presence of actin, which is essential for its function as a motor protein. Involved in melanosome transport. Also mediates the transport of vesicles to the plasma membrane. May also be required for some polarization process involved in dendrite formation. The chain is Unconventional myosin-Va (MYO5A) from Gallus gallus (Chicken).